A 329-amino-acid chain; its full sequence is Protein-arginine N-acetylglucosaminyltransferase NleB (329 aa).

The N-beta-linked (GlcNAc) arginine; by autocatalysis glycan is linked to arginine 13. 48-50 (QWF) lines the UDP-N-acetyl-alpha-D-glucosamine pocket. Arginine 53 carries N-beta-linked (GlcNAc) arginine; by autocatalysis glycosylation. Tyrosine 72 provides a ligand contact to UDP-N-acetyl-alpha-D-glucosamine. A glycan (N-beta-linked (GlcNAc) arginine; by autocatalysis) is linked at arginine 159. Residue 219 to 222 (YLDA) coordinates UDP-N-acetyl-alpha-D-glucosamine. The DXD motif motif lies at 221 to 223 (DAD). Aspartate 223 lines the Mn(2+) pocket. Glutamate 253 serves as the catalytic Proton acceptor. Residue arginine 293 is glycosylated (N-beta-linked (GlcNAc) arginine; by autocatalysis). The Mn(2+) site is built by asparagine 320 and serine 322. Residues serine 322 and 327-329 (SSW) each bind UDP-N-acetyl-alpha-D-glucosamine.

This sequence belongs to the glycosyltransferase NleB family. The cofactor is Mn(2+). Post-translationally, auto-glycosylated: arginine GlcNAcylation is required for activity toward death domain-containing host target proteins.

It localises to the secreted. It is found in the host cell. The catalysed reaction is L-arginyl-[protein] + UDP-N-acetyl-alpha-D-glucosamine = N(omega)-(N-acetyl-beta-D-glucosaminyl)-L-arginyl-[protein] + UDP + H(+). Its function is as follows. Protein-arginine N-acetylglucosaminyltransferase effector that disrupts TNF signaling in infected cells, including NF-kappa-B signaling, apoptosis and necroptosis. Acts by catalyzing the transfer of a single N-acetylglucosamine (GlcNAc) to a conserved arginine residue in the death domain of host proteins FADD, TNFRSF1A and RIPK1: arginine GlcNAcylation prevents homotypic/heterotypic death domain interactions and assembly of the oligomeric TNF-alpha receptor complex, thereby disrupting TNF signaling. Has preference for host FADD as substrate compared to TNFRSF1A and RIPK1. Also acts on host proteins without a death domain: catalyzes GlcNAcylation of host GAPDH protein, thereby preventing GAPDH interaction with TRAF2 and TRAF3, leading to inhibit NF-kappa-B signaling and type I interferon production, respectively. Also displays intra-bacterial activity by mediating GlcNAcylation of glutathione synthetase GshB. Catalyzes auto-GlcNAcylation, which is required for activity toward death domain-containing host target proteins. This Citrobacter rodentium protein is Protein-arginine N-acetylglucosaminyltransferase NleB.